Reading from the N-terminus, the 458-residue chain is Cysteine--tRNA ligase (458 aa).

Position 29 (Cys-29) interacts with Zn(2+). Positions 31-41 (MTVYDLCHLGH) match the 'HIGH' region motif. Zn(2+)-binding residues include Cys-213, His-238, and Glu-242. The 'KMSKS' region signature appears at 270 to 274 (KMSKS). Lys-273 is a binding site for ATP.

It belongs to the class-I aminoacyl-tRNA synthetase family. As to quaternary structure, monomer. The cofactor is Zn(2+).

Its subcellular location is the cytoplasm. The enzyme catalyses tRNA(Cys) + L-cysteine + ATP = L-cysteinyl-tRNA(Cys) + AMP + diphosphate. This chain is Cysteine--tRNA ligase, found in Acidovorax sp. (strain JS42).